Reading from the N-terminus, the 68-residue chain is Sec-independent protein translocase protein TatA (68 aa).

The helical transmembrane segment at 1 to 21 threads the bilayer; the sequence is MGSFSIWHWLIVLVVVLLLFG. Residues 46–68 are disordered; the sequence is EEAASADKTIDGKTVEHKSDEVR. The segment covering 53–68 has biased composition (basic and acidic residues); sequence KTIDGKTVEHKSDEVR.

It belongs to the TatA/E family. In terms of assembly, the Tat system comprises two distinct complexes: a TatABC complex, containing multiple copies of TatA, TatB and TatC subunits, and a separate TatA complex, containing only TatA subunits. Substrates initially bind to the TatABC complex, which probably triggers association of the separate TatA complex to form the active translocon.

It is found in the cell inner membrane. Functionally, part of the twin-arginine translocation (Tat) system that transports large folded proteins containing a characteristic twin-arginine motif in their signal peptide across membranes. TatA could form the protein-conducting channel of the Tat system. The chain is Sec-independent protein translocase protein TatA from Sinorhizobium fredii (strain NBRC 101917 / NGR234).